Reading from the N-terminus, the 202-residue chain is 3-isopropylmalate dehydratase small subunit 1 (202 aa).

The protein belongs to the LeuD family. LeuD type 1 subfamily. Heterodimer of LeuC and LeuD.

The enzyme catalyses (2R,3S)-3-isopropylmalate = (2S)-2-isopropylmalate. Its pathway is amino-acid biosynthesis; L-leucine biosynthesis; L-leucine from 3-methyl-2-oxobutanoate: step 2/4. Functionally, catalyzes the isomerization between 2-isopropylmalate and 3-isopropylmalate, via the formation of 2-isopropylmaleate. The polypeptide is 3-isopropylmalate dehydratase small subunit 1 (Mannheimia succiniciproducens (strain KCTC 0769BP / MBEL55E)).